The sequence spans 442 residues: Ribosomal protein uS12 methylthiotransferase RimO (442 aa).

Positions 9–119 constitute an MTTase N-terminal domain; it reads PRIGFVSLGC…VLSHVHQYVP (111 aa). Residues C18, C54, C83, C151, C155, and C158 each contribute to the [4Fe-4S] cluster site. In terms of domain architecture, Radical SAM core spans 137–375; the sequence is LTPRHYAYLK…QLQQAISTQR (239 aa). One can recognise a TRAM domain in the interval 377 to 442; the sequence is QDKIGREVLV…DEYDLWGSRV (66 aa).

Belongs to the methylthiotransferase family. RimO subfamily. [4Fe-4S] cluster serves as cofactor.

Its subcellular location is the cytoplasm. The enzyme catalyses L-aspartate(89)-[ribosomal protein uS12]-hydrogen + (sulfur carrier)-SH + AH2 + 2 S-adenosyl-L-methionine = 3-methylsulfanyl-L-aspartate(89)-[ribosomal protein uS12]-hydrogen + (sulfur carrier)-H + 5'-deoxyadenosine + L-methionine + A + S-adenosyl-L-homocysteine + 2 H(+). Catalyzes the methylthiolation of an aspartic acid residue of ribosomal protein uS12. In Pectobacterium atrosepticum (strain SCRI 1043 / ATCC BAA-672) (Erwinia carotovora subsp. atroseptica), this protein is Ribosomal protein uS12 methylthiotransferase RimO.